A 273-amino-acid polypeptide reads, in one-letter code: Tryptophan synthase alpha chain (273 aa).

Catalysis depends on proton acceptor residues Glu-49 and Asp-60.

It belongs to the TrpA family. Tetramer of two alpha and two beta chains.

The catalysed reaction is (1S,2R)-1-C-(indol-3-yl)glycerol 3-phosphate + L-serine = D-glyceraldehyde 3-phosphate + L-tryptophan + H2O. The protein operates within amino-acid biosynthesis; L-tryptophan biosynthesis; L-tryptophan from chorismate: step 5/5. In terms of biological role, the alpha subunit is responsible for the aldol cleavage of indoleglycerol phosphate to indole and glyceraldehyde 3-phosphate. The polypeptide is Tryptophan synthase alpha chain (Albidiferax ferrireducens (strain ATCC BAA-621 / DSM 15236 / T118) (Rhodoferax ferrireducens)).